The primary structure comprises 513 residues: Cobyric acid synthase (513 aa).

The GATase cobBQ-type domain occupies 270–470 (RLRIAIVAYP…THGLFESPAV (201 aa)). Residue C351 is the Nucleophile of the active site. Residue H462 is part of the active site.

It belongs to the CobB/CobQ family. CobQ subfamily.

It participates in cofactor biosynthesis; adenosylcobalamin biosynthesis. Functionally, catalyzes amidations at positions B, D, E, and G on adenosylcobyrinic A,C-diamide. NH(2) groups are provided by glutamine, and one molecule of ATP is hydrogenolyzed for each amidation. This Leptothrix cholodnii (strain ATCC 51168 / LMG 8142 / SP-6) (Leptothrix discophora (strain SP-6)) protein is Cobyric acid synthase.